A 34-amino-acid chain; its full sequence is Photosystem II reaction center protein Psb30 (34 aa).

A helical membrane pass occupies residues 5–25; the sequence is VLAQLTVLAFVIAVGPITLIW.

Belongs to the Psb30/Ycf12 family. As to quaternary structure, PSII is composed of 1 copy each of membrane proteins PsbA, PsbB, PsbC, PsbD, PsbE, PsbF, PsbH, PsbI, PsbJ, PsbK, PsbL, PsbM, PsbT, PsbX, PsbY, PsbZ, Psb30/Ycf12, peripheral proteins of the oxygen-evolving complex and a large number of cofactors. It forms dimeric complexes.

It localises to the plastid. It is found in the chloroplast thylakoid membrane. Functionally, a core subunit of photosystem II (PSII), probably helps stabilize the reaction center. The sequence is that of Photosystem II reaction center protein Psb30 from Cyanidioschyzon merolae (strain NIES-3377 / 10D) (Unicellular red alga).